Consider the following 500-residue polypeptide: Protein PIGMENT DEFECTIVE 338, chloroplastic (500 aa).

A chloroplast-targeting transit peptide spans 1 to 63 (MQTLLCQPCK…FAFRGFSICR (63 aa)). 3 consecutive S1 motif domains span residues 156–265 (KPGD…LSSR), 283–351 (NEPI…LSEK), and 362–431 (GTLL…LSIA).

The protein belongs to the bacterial ribosomal protein bS1 family. Interacts with CRP1 and PRFB3. Present in leaves (at protein level). Confined to leaf chlorenchyma cells.

It localises to the plastid. It is found in the chloroplast. Functionally, RNA-binding protein that acts as an RNA chaperone to remodel RNA structure and activates their translation. Required for seed pigmentation. Necessary for chloroplast development and subsequent photosynthetic electron flow, as well as for non-photochemical quenching (NPQ). Rubisco regulatory factor which regulates the concerted biogenesis of NDH, PSI (including PsaA, PsaB, PsaD, PsaF, PsaL, PsaG, PsaK and NdhH) and Cytb(6)f (including PetA, PetB, PetC and PetD) complexes. Binds specifically to and involved in the post-transcriptional regulation of plastid-encoded mRNAs (e.g. rbcL, petA, petB, petD and Ycf1), thus modulating expression, cellular localization/compartmentalization, and photosynthetic function. This is Protein PIGMENT DEFECTIVE 338, chloroplastic from Arabidopsis thaliana (Mouse-ear cress).